The following is a 150-amino-acid chain: Large ribosomal subunit protein bL9 (150 aa).

The protein belongs to the bacterial ribosomal protein bL9 family.

Binds to the 23S rRNA. The polypeptide is Large ribosomal subunit protein bL9 (Streptococcus pneumoniae (strain CGSP14)).